The chain runs to 436 residues: MAVTVETLEKLERKITLSLPLTAIQSEVDSRLKRLARTVKMDGFRPGKVPMNVVAQRYGYSVQYEVLNDKVGEAFAQAANEANLRVAGQPRITEKEGAPEGQVTFDAVFEVFPEVKIGDLSTADVEKISADVTDAAIDKTIDILRKQRRTFAQRAQGTPAEDGDRVTVDFEGKIDGETFSGGKAEDFQFLVGEGQMLKEFEDAVRGMKAGESKTFPLAFPEDYHGKDVAGKTADFLVTVKKIEAAHLPEVNEQLAKSLGIADGTVEGLRADIKKNLEREVKFRLLARNKQAVMEALVSKAELDLPNASVQAEIARLLEGARADLKQRGIKDADKAEIPEDVFRPQAERRVRLGLVVAELVRANNLHATPEQLKAHVDELAASYEKPEDVVRWYFGDRQRLAEVEAVVIENNVTAFVLDKAKVTEKAISFDELMGQG.

The PPIase FKBP-type domain occupies 163 to 248 (GDRVTVDFEG…VKKIEAAHLP (86 aa)).

It belongs to the FKBP-type PPIase family. Tig subfamily.

The protein localises to the cytoplasm. The enzyme catalyses [protein]-peptidylproline (omega=180) = [protein]-peptidylproline (omega=0). Involved in protein export. Acts as a chaperone by maintaining the newly synthesized protein in an open conformation. Functions as a peptidyl-prolyl cis-trans isomerase. The polypeptide is Trigger factor (Paracidovorax citrulli (strain AAC00-1) (Acidovorax citrulli)).